Here is a 251-residue protein sequence, read N- to C-terminus: uncharacterized protein (251 aa).

Positions 1 to 15 (MSAISSLVLIGWAMC) are cleaved as a signal peptide. N-linked (GlcNAc...) asparagine glycosylation is found at Asn225 and Asn242.

This is an uncharacterized protein from Encephalitozoon cuniculi (strain GB-M1) (Microsporidian parasite).